We begin with the raw amino-acid sequence, 834 residues long: Glycerol-3-phosphate acyltransferase (834 aa).

The HXXXXD motif motif lies at 304–309; it reads CHRSHM. Positions 800–834 are disordered; that stretch reads SVSMPAETSNQPEAPETPETPETPETPEPEGKTES.

It belongs to the GPAT/DAPAT family.

It is found in the cell inner membrane. The enzyme catalyses sn-glycerol 3-phosphate + an acyl-CoA = a 1-acyl-sn-glycero-3-phosphate + CoA. It participates in phospholipid metabolism; CDP-diacylglycerol biosynthesis; CDP-diacylglycerol from sn-glycerol 3-phosphate: step 1/3. This Yersinia pseudotuberculosis serotype I (strain IP32953) protein is Glycerol-3-phosphate acyltransferase.